The chain runs to 897 residues: Alpha-actinin-2 (897 aa).

The segment at 1-257 is actin-binding; that stretch reads MNSMNQIETN…IMTYVSCFYH (257 aa). Calponin-homology (CH) domains follow at residues 41–145 and 154–260; these read KQQR…LRFA and TSAK…HAFA. Spectrin repeat units lie at residues 284–394, 404–509, 519–630, and 640–743; these read RLME…WLLN, HLAE…ALER, QLHL…SLQE, and RLRR…EVET. EF-hand domains are found at residues 756–791 and 792–827; these read EQMNDFRASFNHFDRRKNGLMDHDDFRACLISMGYD and LGEAEFARIMSLVDPNGQGTVTFQSFIDFMTRETAD. 6 residues coordinate Ca(2+): D769, N773, D780, D805, N807, and T811.

The protein belongs to the alpha-actinin family. In terms of assembly, homodimer; antiparallel. In terms of processing, ubiquitinated by FBXL22, leading to proteasomal degradation.

The protein resides in the cytoplasm. It is found in the myofibril. It localises to the sarcomere. Its subcellular location is the z line. Its function is as follows. F-actin cross-linking protein which is thought to anchor actin to a variety of intracellular structures. This is a bundling protein. The polypeptide is Alpha-actinin-2 (ACTN2) (Gallus gallus (Chicken)).